Consider the following 182-residue polypeptide: Probable peptidyl-prolyl cis-trans isomerase A (182 aa).

One can recognise a PPIase cyclophilin-type domain in the interval 13–181; the sequence is QNATATLHTN…EPVVIDSITI (169 aa). The interval 161–182 is disordered; sequence TTATDGNDRPTEPVVIDSITIS.

Belongs to the cyclophilin-type PPIase family.

The protein resides in the cytoplasm. It carries out the reaction [protein]-peptidylproline (omega=180) = [protein]-peptidylproline (omega=0). Functionally, PPIases accelerate the folding of proteins. It catalyzes the cis-trans isomerization of proline imidic peptide bonds in oligopeptides. This chain is Probable peptidyl-prolyl cis-trans isomerase A (ppiA), found in Mycobacterium leprae (strain TN).